Here is a 307-residue protein sequence, read N- to C-terminus: Serine/threonine-protein phosphatase 4 catalytic subunit (307 aa).

Ala2 bears the N-acetylalanine mark. Positions 54, 56, 82, and 114 each coordinate Mn(2+). The active-site Proton donor is the His115. The Mn(2+) site is built by His164 and His238. Leu307 carries the leucine methyl ester modification.

Belongs to the PPP phosphatase family. PP-4 (PP-X) subfamily. As to quaternary structure, serine/threonine-protein phosphatase 4 (PP4) occurs in different assemblies of the catalytic and one or more regulatory subunits. Component of the PP4 complexes PPP4C-PPP4R1, PPP4C-PPP4R2, PPP4C-PPP4R2-PPP4R3A, PPP4C-PPP4R2-PPP4R3B and PPP4C-PPP4R4. The PPP4C-PPP4R2 complex appears to be a tetramer composed of 2 molecules of PPP4C and 2 molecules of PPP4R2. Interacts with REL, NFKB1/p50 and RELA. Interacts with SMN1 and GEMIN4. Interacts with IRS4 (phosphorylated). Interacts with SMEK1/PPP4R3A; the interaction requires PP4R2. Interacts with HDAC3. Mn(2+) serves as cofactor. Post-translationally, methylation at the C-terminal Leu-307 is critical for interactions with regulatory subunits and functions in DNA repair.

Its subcellular location is the cytoplasm. It is found in the nucleus. The protein resides in the cytoskeleton. The protein localises to the microtubule organizing center. It localises to the centrosome. It catalyses the reaction O-phospho-L-seryl-[protein] + H2O = L-seryl-[protein] + phosphate. The enzyme catalyses O-phospho-L-threonyl-[protein] + H2O = L-threonyl-[protein] + phosphate. In terms of biological role, protein phosphatase that is involved in many processes such as microtubule organization at centrosomes, maturation of spliceosomal snRNPs, apoptosis, DNA repair, tumor necrosis factor (TNF)-alpha signaling, activation of c-Jun N-terminal kinase MAPK8, regulation of histone acetylation, DNA damage checkpoint signaling, NF-kappa-B activation and cell migration. The PPP4C-PPP4R1 PP4 complex may play a role in dephosphorylation and regulation of HDAC3. The PPP4C-PPP4R2-PPP4R3A PP4 complex specifically dephosphorylates H2AX phosphorylated on Ser-140 (gamma-H2AX) generated during DNA replication and required for DNA DSB repair. Dephosphorylates NDEL1 at CDK1 phosphorylation sites and negatively regulates CDK1 activity in interphase. In response to DNA damage, catalyzes RPA2 dephosphorylation, an essential step for DNA repair since it allows the efficient RPA2-mediated recruitment of RAD51 to chromatin. This Rattus norvegicus (Rat) protein is Serine/threonine-protein phosphatase 4 catalytic subunit (Ppp4c).